A 915-amino-acid polypeptide reads, in one-letter code: Probable inorganic carbon transporter subunit DabA (915 aa).

The Zn(2+) site is built by Cys-392, Asp-394, His-566, and Cys-581.

The protein belongs to the inorganic carbon transporter (TC 9.A.2) DabA family. In terms of assembly, forms a complex with DabB. Requires Zn(2+) as cofactor.

The protein localises to the cell inner membrane. Part of an energy-coupled inorganic carbon pump. The polypeptide is Probable inorganic carbon transporter subunit DabA (Nitrosospira multiformis (strain ATCC 25196 / NCIMB 11849 / C 71)).